The chain runs to 867 residues: Replication origin-binding protein (867 aa).

The disordered stretch occupies residues Met1–Asp39. The span at Arg15 to Gly28 shows a compositional bias: low complexity. A Helicase ATP-binding domain is found at Ala86–His251. Position 99-106 (Ala99–Thr106) interacts with ATP.

This sequence belongs to the herpesviridae OriBP family. As to quaternary structure, homodimer. Interacts with the major DNA-binding protein ICP8. Interacts with the helicase/primase component UL8 and the polymerase accessory protein UL42.

It localises to the host nucleus. Its function is as follows. Functions as a docking protein to recruit essential components of the viral replication machinery to viral DNA origins. In the presence of the major DNA-binding protein, opens dsDNA leading to a conformational change in the origin that facilitates DNA unwinding and subsequent replication. The chain is Replication origin-binding protein from Human herpesvirus 2 (strain HG52) (HHV-2).